Consider the following 261-residue polypeptide: Cytochrome c oxidase subunit 3 (261 aa).

Over 1-15 (MTHQSHAYHMVKPSP) the chain is Mitochondrial matrix. A helical transmembrane segment spans residues 16 to 34 (WPLTGALSALLMTSGLAMW). At 35–40 (FHFYST) the chain is on the mitochondrial intermembrane side. Residues 41 to 66 (TLLTLGLLTNTLTMYQWWRDVMREGT) form a helical membrane-spanning segment. Topologically, residues 67–72 (YQGHHT) are mitochondrial matrix. The chain crosses the membrane as a helical span at residues 73–105 (PPVQKGLRYGMILFITSEVFFFAGFFWAFYHSS). Over 106–128 (LAPTPQLGGHWPPTGITPLNPLE) the chain is Mitochondrial intermembrane. The chain crosses the membrane as a helical span at residues 129–152 (VPLLNTSVLLASGVSITWAHHSLM). Residues 153-155 (ENN) are Mitochondrial matrix-facing. Residues 156–183 (RNQMIQALLITILLGLYFTLLQASEYFE) traverse the membrane as a helical segment. The Mitochondrial intermembrane portion of the chain corresponds to 184 to 190 (SPFTISD). Residues 191 to 223 (GIYGSTFFVATGFHGLHVIIGSTFLTICLIRQL) traverse the membrane as a helical segment. Over 224–232 (MFHFTSKHH) the chain is Mitochondrial matrix. Residues 233–256 (FGFQAAAWYWHFVDVVWLFLYVSI) traverse the membrane as a helical segment. Over 257 to 261 (YWWGS) the chain is Mitochondrial intermembrane.

It belongs to the cytochrome c oxidase subunit 3 family. As to quaternary structure, component of the cytochrome c oxidase (complex IV, CIV), a multisubunit enzyme composed of 14 subunits. The complex is composed of a catalytic core of 3 subunits MT-CO1, MT-CO2 and MT-CO3, encoded in the mitochondrial DNA, and 11 supernumerary subunits COX4I, COX5A, COX5B, COX6A, COX6B, COX6C, COX7A, COX7B, COX7C, COX8 and NDUFA4, which are encoded in the nuclear genome. The complex exists as a monomer or a dimer and forms supercomplexes (SCs) in the inner mitochondrial membrane with NADH-ubiquinone oxidoreductase (complex I, CI) and ubiquinol-cytochrome c oxidoreductase (cytochrome b-c1 complex, complex III, CIII), resulting in different assemblies (supercomplex SCI(1)III(2)IV(1) and megacomplex MCI(2)III(2)IV(2)).

The protein localises to the mitochondrion inner membrane. The catalysed reaction is 4 Fe(II)-[cytochrome c] + O2 + 8 H(+)(in) = 4 Fe(III)-[cytochrome c] + 2 H2O + 4 H(+)(out). Its function is as follows. Component of the cytochrome c oxidase, the last enzyme in the mitochondrial electron transport chain which drives oxidative phosphorylation. The respiratory chain contains 3 multisubunit complexes succinate dehydrogenase (complex II, CII), ubiquinol-cytochrome c oxidoreductase (cytochrome b-c1 complex, complex III, CIII) and cytochrome c oxidase (complex IV, CIV), that cooperate to transfer electrons derived from NADH and succinate to molecular oxygen, creating an electrochemical gradient over the inner membrane that drives transmembrane transport and the ATP synthase. Cytochrome c oxidase is the component of the respiratory chain that catalyzes the reduction of oxygen to water. Electrons originating from reduced cytochrome c in the intermembrane space (IMS) are transferred via the dinuclear copper A center (CU(A)) of subunit 2 and heme A of subunit 1 to the active site in subunit 1, a binuclear center (BNC) formed by heme A3 and copper B (CU(B)). The BNC reduces molecular oxygen to 2 water molecules using 4 electrons from cytochrome c in the IMS and 4 protons from the mitochondrial matrix. The polypeptide is Cytochrome c oxidase subunit 3 (MT-CO3) (Pan troglodytes (Chimpanzee)).